We begin with the raw amino-acid sequence, 209 residues long: GTP cyclohydrolase 1 (209 aa).

Zn(2+) contacts are provided by C100, H103, and C171.

It belongs to the GTP cyclohydrolase I family. In terms of assembly, toroid-shaped homodecamer, composed of two pentamers of five dimers.

The enzyme catalyses GTP + H2O = 7,8-dihydroneopterin 3'-triphosphate + formate + H(+). The protein operates within cofactor biosynthesis; 7,8-dihydroneopterin triphosphate biosynthesis; 7,8-dihydroneopterin triphosphate from GTP: step 1/1. The sequence is that of GTP cyclohydrolase 1 from Ralstonia nicotianae (strain ATCC BAA-1114 / GMI1000) (Ralstonia solanacearum).